Consider the following 1412-residue polypeptide: DNA-directed RNA polymerase subunit beta'' (1412 aa).

Cys-220, Cys-294, Cys-301, and Cys-304 together coordinate Zn(2+).

This sequence belongs to the RNA polymerase beta' chain family. RpoC2 subfamily. In plastids the minimal PEP RNA polymerase catalytic core is composed of four subunits: alpha, beta, beta', and beta''. When a (nuclear-encoded) sigma factor is associated with the core the holoenzyme is formed, which can initiate transcription. The cofactor is Zn(2+).

It is found in the plastid. The protein localises to the chloroplast. The catalysed reaction is RNA(n) + a ribonucleoside 5'-triphosphate = RNA(n+1) + diphosphate. DNA-dependent RNA polymerase catalyzes the transcription of DNA into RNA using the four ribonucleoside triphosphates as substrates. This chain is DNA-directed RNA polymerase subunit beta'', found in Chara vulgaris (Common stonewort).